We begin with the raw amino-acid sequence, 628 residues long: Putative pentatricopeptide repeat-containing protein At3g13770, mitochondrial (628 aa).

The transit peptide at 1–19 (MFNLMRLIHRSFSSSPTNY) directs the protein to the mitochondrion. PPR repeat units follow at residues 51–85 (GFHG…RYLP), 86–116 (ATYL…MPEK), 117–151 (NVVS…DGKP), 152–186 (NEFT…NYDS), 187–217 (HIFV…LPER), 218–252 (DVVS…GMSP), 253–287 (NYVT…ELPF), 288–318 (YAVL…MPER), 319–353 (TAIS…KRVK), 355–389 (DAVT…EYGT), and 392–422 (GTEH…MPSK). The type E motif stretch occupies residues 427–502 (VLGSLLGACR…EPGRSWIQHE (76 aa)). Positions 503–533 (QTLHYFHANDRTHPRREEVLAKMKEISIKMK) are type E(+) motif. The interval 534–628 (QAGYVPDLSC…DGICSCGDYW (95 aa)) is type DYW motif.

Belongs to the PPR family. PCMP-H subfamily.

It localises to the mitochondrion. The chain is Putative pentatricopeptide repeat-containing protein At3g13770, mitochondrial (PCMP-H85) from Arabidopsis thaliana (Mouse-ear cress).